We begin with the raw amino-acid sequence, 436 residues long: Enolase (436 aa).

Gln-163 serves as a coordination point for (2R)-2-phosphoglycerate. The active-site Proton donor is Glu-205. Residues Asp-242, Glu-285, and Asp-312 each contribute to the Mg(2+) site. (2R)-2-phosphoglycerate is bound by residues Lys-337, Arg-366, Ser-367, and Lys-388. Lys-337 acts as the Proton acceptor in catalysis.

Belongs to the enolase family. Requires Mg(2+) as cofactor.

It localises to the cytoplasm. The protein localises to the secreted. It is found in the cell surface. The catalysed reaction is (2R)-2-phosphoglycerate = phosphoenolpyruvate + H2O. Its pathway is carbohydrate degradation; glycolysis; pyruvate from D-glyceraldehyde 3-phosphate: step 4/5. In terms of biological role, catalyzes the reversible conversion of 2-phosphoglycerate (2-PG) into phosphoenolpyruvate (PEP). It is essential for the degradation of carbohydrates via glycolysis. The sequence is that of Enolase from Solidesulfovibrio magneticus (strain ATCC 700980 / DSM 13731 / RS-1) (Desulfovibrio magneticus).